Here is a 63-residue protein sequence, read N- to C-terminus: Large ribosomal subunit protein bL28 (63 aa).

It belongs to the bacterial ribosomal protein bL28 family.

The chain is Large ribosomal subunit protein bL28 from Treponema denticola (strain ATCC 35405 / DSM 14222 / CIP 103919 / JCM 8153 / KCTC 15104).